The chain runs to 155 residues: Putative pre-16S rRNA nuclease (155 aa).

The protein belongs to the YqgF nuclease family.

The protein resides in the cytoplasm. Its function is as follows. Could be a nuclease involved in processing of the 5'-end of pre-16S rRNA. This is Putative pre-16S rRNA nuclease from Xanthomonas campestris pv. campestris (strain B100).